Here is a 334-residue protein sequence, read N- to C-terminus: Transcription initiation factor IIB (334 aa).

The segment at 34–65 adopts a TFIIB-type zinc-finger fold; that stretch reads EELVCPMCDSKNIIKDYEKAEIVCEDCGCVLQ. The Zn(2+) site is built by Cys-38, Cys-41, Cys-57, and Cys-60. Tandem repeats lie at residues 151–234 and 245–326.

This sequence belongs to the TFIIB family.

Its function is as follows. Stabilizes TBP binding to an archaeal box-A promoter. Also responsible for recruiting RNA polymerase II to the pre-initiation complex (DNA-TBP-TFIIB). This chain is Transcription initiation factor IIB, found in Methanococcus aeolicus (strain ATCC BAA-1280 / DSM 17508 / OCM 812 / Nankai-3).